A 630-amino-acid chain; its full sequence is 1-deoxy-D-xylulose-5-phosphate synthase (630 aa).

Thiamine diphosphate is bound by residues His72 and 113 to 115 (GHS). Asp144 serves as a coordination point for Mg(2+). Residues 145 to 146 (GA), Asn173, Tyr284, and Glu367 each bind thiamine diphosphate. Residue Asn173 coordinates Mg(2+).

It belongs to the transketolase family. DXPS subfamily. As to quaternary structure, homodimer. It depends on Mg(2+) as a cofactor. The cofactor is thiamine diphosphate.

It carries out the reaction D-glyceraldehyde 3-phosphate + pyruvate + H(+) = 1-deoxy-D-xylulose 5-phosphate + CO2. It functions in the pathway metabolic intermediate biosynthesis; 1-deoxy-D-xylulose 5-phosphate biosynthesis; 1-deoxy-D-xylulose 5-phosphate from D-glyceraldehyde 3-phosphate and pyruvate: step 1/1. In terms of biological role, catalyzes the acyloin condensation reaction between C atoms 2 and 3 of pyruvate and glyceraldehyde 3-phosphate to yield 1-deoxy-D-xylulose-5-phosphate (DXP). The sequence is that of 1-deoxy-D-xylulose-5-phosphate synthase from Bacillus cereus (strain G9842).